Reading from the N-terminus, the 395-residue chain is Beta-1,4-galactosyltransferase 3 (395 aa).

Over 1-10 (MLRRLLERPC) the chain is Cytoplasmic. A helical; Signal-anchor for type II membrane protein membrane pass occupies residues 11 to 31 (TLALLVGSQLAVMMYLSLGGF). At 32–395 (RSLSALFGRD…ANHTAPRGSH (364 aa)) the chain is on the lumenal side. An N-linked (GlcNAc...) asparagine glycan is attached at asparagine 57. Residues cysteine 79 and cysteine 121 are joined by a disulfide bond. 132-136 (PHRAR) contributes to the UDP-alpha-D-galactose binding site. Residue asparagine 168 is glycosylated (N-linked (GlcNAc...) asparagine). Residues 171–173 (FNR), 198–199 (VD), tyrosine 228, and tryptophan 260 each bind UDP-alpha-D-galactose. A disulfide bond links cysteine 192 and cysteine 211. Residue aspartate 199 participates in Mn(2+) binding. N-acetyl-D-glucosamine is bound at residue 262–265 (GEDD). Residue histidine 293 coordinates Mn(2+). 293–295 (HRG) serves as a coordination point for UDP-alpha-D-galactose. Arginine 305 lines the N-acetyl-D-glucosamine pocket. Asparagine 339 carries N-linked (GlcNAc...) asparagine glycosylation. The tract at residues 340–395 (ITADIGTDPRGPRSPSGPRYPPGSSQAFRQEMLQRRPPARPGPLPTANHTAPRGSH) is disordered. Low complexity predominate over residues 352–364 (RSPSGPRYPPGSS). The N-linked (GlcNAc...) asparagine glycan is linked to asparagine 387.

This sequence belongs to the glycosyltransferase 7 family. Requires Mn(2+) as cofactor.

It localises to the golgi apparatus. It is found in the golgi stack membrane. The catalysed reaction is an N-acetyl-beta-D-glucosaminyl derivative + UDP-alpha-D-galactose = a beta-D-galactosyl-(1-&gt;4)-N-acetyl-beta-D-glucosaminyl derivative + UDP + H(+). It carries out the reaction N-acetyl-D-glucosamine + UDP-alpha-D-galactose = beta-D-galactosyl-(1-&gt;4)-N-acetyl-D-glucosamine + UDP + H(+). It catalyses the reaction a beta-D-GlcNAc-(1-&gt;3)-beta-D-Gal-(1-&gt;4)-beta-D-Glc-(1&lt;-&gt;1)-Cer(d18:1(4E)) + UDP-alpha-D-galactose = a neolactoside nLc4Cer(d18:1(4E)) + UDP + H(+). The enzyme catalyses a beta-D-glucosylceramide + UDP-alpha-D-galactose = a beta-D-galactosyl-(1-&gt;4)-beta-D-glucosyl-(1&lt;-&gt;1)-ceramide + UDP + H(+). The catalysed reaction is a neolactoside IV(3)-beta-GlcNAc-nLc4Cer + UDP-alpha-D-galactose = a neolactoside nLc6Cer + UDP + H(+). It participates in protein modification; protein glycosylation. Its function is as follows. Responsible for the synthesis of complex-type N-linked oligosaccharides in many glycoproteins as well as the carbohydrate moieties of glycolipids. This is Beta-1,4-galactosyltransferase 3 from Mus musculus (Mouse).